The sequence spans 924 residues: Protein translocase subunit SecA (924 aa).

ATP contacts are provided by residues Gln-87, Gly-105–Thr-109, and Asp-515. Zn(2+) contacts are provided by Cys-908, Cys-910, Cys-919, and His-920.

It belongs to the SecA family. In terms of assembly, monomer and homodimer. Part of the essential Sec protein translocation apparatus which comprises SecA, SecYEG and auxiliary proteins SecDF-YajC and YidC. Zn(2+) serves as cofactor.

The protein localises to the cell inner membrane. The protein resides in the cytoplasm. It catalyses the reaction ATP + H2O + cellular proteinSide 1 = ADP + phosphate + cellular proteinSide 2.. Functionally, part of the Sec protein translocase complex. Interacts with the SecYEG preprotein conducting channel. Has a central role in coupling the hydrolysis of ATP to the transfer of proteins into and across the cell membrane, serving both as a receptor for the preprotein-SecB complex and as an ATP-driven molecular motor driving the stepwise translocation of polypeptide chains across the membrane. The sequence is that of Protein translocase subunit SecA from Cupriavidus pinatubonensis (strain JMP 134 / LMG 1197) (Cupriavidus necator (strain JMP 134)).